The chain runs to 157 residues: MRMIQAYLCDSVSGEPYTCKGDLCEIPFNRNFTIDLVNLSVSTEFQVKITMTPHHDLGTFVVEPKNVFSIKRAVKGDAAFKVERAAGWLPDTPQVLTLFVYERLNPVEWHSECMYENLETDGGTVIVPGEATGQRFGTATEVPTMFLFKRMFVVKGV.

This is Immediate-early protein ICP-18 from Frog virus 3 (isolate Goorha) (FV-3).